The chain runs to 303 residues: Uridine diphosphate glucose pyrophosphatase NUDT22 (303 aa).

Residues phenylalanine 56, tyrosine 87, arginine 139, alanine 144, aspartate 151, histidine 156, and glutamate 158 each contribute to the substrate site. The Nudix hydrolase domain maps to 118-285 (ADPLGVGAAL…KGAIILYNRV (168 aa)). The segment at 148-168 (GLVDVPGGHPEPQALCPGGSP) is disordered. Positions 175-196 (GQLVVHELFSSVLQEICDEVNL) match the Nudix box motif. Residues glutamate 189 and glutamate 193 each coordinate Mg(2+). Residue serine 274 coordinates substrate.

This sequence belongs to the Nudix hydrolase family. Mg(2+) serves as cofactor.

The enzyme catalyses UDP-sugar + H2O = UMP + alpha-D-aldose 1-phosphate.. Its function is as follows. Hydrolyzes UDP-glucose to glucose 1-phosphate and UMP and UDP-galactose to galactose 1-phosphate and UMP. Preferred substrate is UDP-glucose. This chain is Uridine diphosphate glucose pyrophosphatase NUDT22 (NUDT22), found in Homo sapiens (Human).